We begin with the raw amino-acid sequence, 318 residues long: Protein-L-histidine N-pros-methyltransferase (318 aa).

An N-terminal signal peptide occupies residues 1 to 18 (MRLLAGWLCLSLASVWLA). Asparagine 35 carries an N-linked (GlcNAc...) asparagine glycan. The S-adenosyl-L-homocysteine site is built by glutamate 174, asparagine 210, and tyrosine 295.

The protein belongs to the METTL9 family. As to expression, expressed in liver, colon, small intestine, skin, kidney and to a lesser extent in spleen, lung, thymus and stomach. Not detected in fibroblast and endothelial cells.

It is found in the endoplasmic reticulum. The protein resides in the mitochondrion. The catalysed reaction is L-histidyl-[protein] + S-adenosyl-L-methionine = N(pros)-methyl-L-histidyl-[protein] + S-adenosyl-L-homocysteine + H(+). Functionally, protein-histidine N-methyltransferase that specifically catalyzes 1-methylhistidine (pros-methylhistidine) methylation of target proteins. Specifically methylates the second His of proteins with a His-x-His (HxH) motif (where 'x' is preferably a small amino acid), while exploiting the first one as a recognition signature. Catalyzes methylation of target proteins such as S100A9, NDUFB3, SLC39A5, SLC39A7, ARMC6 and DNAJB12; 1-methylhistidine modification may affect the binding of zinc and other metals to its target proteins. Constitutes the main methyltransferase for the 1-methylhistidine modification in cell. The chain is Protein-L-histidine N-pros-methyltransferase from Mus musculus (Mouse).